We begin with the raw amino-acid sequence, 141 residues long: Suppressor of RNA silencing (141 aa).

2 short sequence motifs (bipartite nuclear localization signal) span residues 75 to 91 (RKRVETRNREIWKQIRR) and 111 to 128 (KKKFKEDREFGTPKRFLR). The disordered stretch occupies residues 94-117 (AENMSATAKKSHNSKTSKKKFKED). A compositionally biased stretch (basic residues) spans 102–113 (KKSHNSKTSKKK).

It is found in the host cytoplasm. Its subcellular location is the host nucleus. Its function is as follows. Weak suppressor of RNA-mediated gene silencing, also known as post-transcriptional gene silencing (PTGS), a mechanism of plant viral defense that performs sequence-specific inhibition of viral mRNAs expression. This could be used by the virus to infect efficiently the host the meristem cells. The sequence is that of Suppressor of RNA silencing from Tobacco rattle virus (isolate PpK20) (TRV).